The primary structure comprises 591 residues: Glutathione hydrolase (591 aa).

An N-terminal signal peptide occupies residues 1–41; sequence MASKWIEEQPLVHRRDIRISSKSRIAAGLLVLLVLWRYGLP. R122 contacts L-glutamate. 3 N-linked (GlcNAc...) asparagine glycosylation sites follow: N135, N270, and N389. Catalysis depends on T393, which acts as the Nucleophile. Residues T411, E432, and 464–465 each bind L-glutamate; that span reads SA. N-linked (GlcNAc...) asparagine glycosylation occurs at N534.

The protein belongs to the gamma-glutamyltransferase family.

The enzyme catalyses an N-terminal (5-L-glutamyl)-[peptide] + an alpha-amino acid = 5-L-glutamyl amino acid + an N-terminal L-alpha-aminoacyl-[peptide]. It catalyses the reaction glutathione + H2O = L-cysteinylglycine + L-glutamate. The catalysed reaction is an S-substituted glutathione + H2O = an S-substituted L-cysteinylglycine + L-glutamate. It functions in the pathway mycotoxin biosynthesis. Its function is as follows. Gamma-glutamyltransferase; part of the gene cluster that mediates the biosynthesis of the secondary metabolite ustiloxin B, an antimitotic tetrapeptide. First, ustA is processed by the subtilisin-like endoprotease Kex2 that is outside the ustiloxin B gene cluster, at the C-terminal side of Arg-Lys, after transfer to Golgi apparatus through the endoplasmic reticulum (ER). Cleavage by KEX2 generates 16 peptides YAIG-I to YAIG-XVI. To process the precursor peptide further, at least two peptidases are necessary to cleave the N-terminal and C-terminal sides of the Tyr-Ala-Ile-Gly core peptide which serves as backbone for the synthesis of ustiloxin B, through cyclization and modification of the tyrosine with a non-protein coding amino acid, norvaline. One of the two peptidases must be the serine peptidase ustP; and the other pepdidase is probably ustH. Macrocyclization of the core peptide derived from ustA requires the tyrosinase ustQ, as well as the homologous oxidases ustYa and ustYb, and leads to the production of the first cyclization product N-desmethylustiloxin F. For the formation of N-desmethylustiloxin F, three oxidation steps are required, hydroxylation at the benzylic position, hydroxylation at either the aromatic ring of Tyr or beta-position of Ile, and oxidative cyclization. UstQ may catalyze the oxidation of a phenol moiety, whereas the ustYa and ustYb are most likely responsible for the remaining two-step oxidations. N-desmethylustiloxin F is then methylated by ustM to yield ustiloxin F which in turn substrate of the cytochrome P450 monooxygenase ustC which catalyzes the formation of S-deoxyustiloxin H. The flavoprotein monooxygenases ustF1 and ustF2 then participate in the modification of the side chain of S-deoxyustiloxin H, leading to the synthesis of an oxime intermediate, via ustiloxin H. Finally, carboxylative dehydration performed by the cysteine desulfurase-like protein ustD yields ustiloxin B. This is Glutathione hydrolase from Aspergillus flavus (strain ATCC 200026 / FGSC A1120 / IAM 13836 / NRRL 3357 / JCM 12722 / SRRC 167).